Here is a 113-residue protein sequence, read N- to C-terminus: Tyrosine-protein phosphatase 15 (113 aa).

The Tyrosine-protein phosphatase domain maps to 1-113; the sequence is WRMVYDNNVN…RSTGDGVALI (113 aa).

It belongs to the protein-tyrosine phosphatase family.

The catalysed reaction is O-phospho-L-tyrosyl-[protein] + H2O = L-tyrosyl-[protein] + phosphate. This Styela plicata (Wrinkled sea squirt) protein is Tyrosine-protein phosphatase 15 (STY-15).